The chain runs to 374 residues: N-acetyldiaminopimelate deacetylase (374 aa).

The active site involves Asp69. Glu128 functions as the Proton acceptor in the catalytic mechanism.

Belongs to the peptidase M20A family. N-acetyldiaminopimelate deacetylase subfamily.

It catalyses the reaction N-acetyl-(2S,6S)-2,6-diaminopimelate + H2O = (2S,6S)-2,6-diaminopimelate + acetate. It functions in the pathway amino-acid biosynthesis; L-lysine biosynthesis via DAP pathway; LL-2,6-diaminopimelate from (S)-tetrahydrodipicolinate (acetylase route): step 3/3. Catalyzes the conversion of N-acetyl-diaminopimelate to diaminopimelate and acetate. This is N-acetyldiaminopimelate deacetylase from Bacillus licheniformis (strain ATCC 14580 / DSM 13 / JCM 2505 / CCUG 7422 / NBRC 12200 / NCIMB 9375 / NCTC 10341 / NRRL NRS-1264 / Gibson 46).